Here is a 72-residue protein sequence, read N- to C-terminus: Translation initiation factor IF-1 (72 aa).

The S1-like domain occupies 1–72; the sequence is MAKDDVIEVE…TRGRITYRYK (72 aa). Position 60 is a phosphotyrosine (Tyr-60).

This sequence belongs to the IF-1 family. Component of the 30S ribosomal translation pre-initiation complex which assembles on the 30S ribosome in the order IF-2 and IF-3, IF-1 and N-formylmethionyl-tRNA(fMet); mRNA recruitment can occur at any time during PIC assembly.

The protein localises to the cytoplasm. Functionally, one of the essential components for the initiation of protein synthesis. Stabilizes the binding of IF-2 and IF-3 on the 30S subunit to which N-formylmethionyl-tRNA(fMet) subsequently binds. Helps modulate mRNA selection, yielding the 30S pre-initiation complex (PIC). Upon addition of the 50S ribosomal subunit IF-1, IF-2 and IF-3 are released leaving the mature 70S translation initiation complex. The chain is Translation initiation factor IF-1 from Oceanobacillus iheyensis (strain DSM 14371 / CIP 107618 / JCM 11309 / KCTC 3954 / HTE831).